Here is a 399-residue protein sequence, read N- to C-terminus: Serine palmitoyltransferase (399 aa).

Pyridoxal 5'-phosphate-binding positions include 113-114 (GF), His-213, Thr-241, and Ser-243. Residue Lys-244 is modified to N6-(pyridoxal phosphate)lysine.

It belongs to the class-II pyridoxal-phosphate-dependent aminotransferase family. As to quaternary structure, homodimer. Pyridoxal 5'-phosphate serves as cofactor.

It localises to the cytoplasm. The catalysed reaction is L-serine + hexadecanoyl-CoA + H(+) = 3-oxosphinganine + CO2 + CoA. Its pathway is lipid metabolism; sphingolipid metabolism. Its function is as follows. Catalyzes the condensation of L-serine with palmitoyl-CoA (hexadecanoyl-CoA) to produce 3-oxosphinganine. This Sphingobacterium spiritivorum (Flavobacterium spiritivorum) protein is Serine palmitoyltransferase.